Consider the following 421-residue polypeptide: 2',3'-cyclic-nucleotide 3'-phosphodiesterase (421 aa).

Phosphoserine is present on residues serine 6 and serine 9. Tyrosine 110 is subject to Phosphotyrosine. The residue at position 170 (serine 170) is a Phosphoserine. The active-site Proton acceptor is histidine 251. A substrate-binding site is contributed by threonine 253. Histidine 330 functions as the Proton donor in the catalytic mechanism. Threonine 332 is a binding site for substrate. Serine 359 carries the post-translational modification Phosphoserine. Cysteine 418 bears the Cysteine methyl ester mark. Cysteine 418 is lipidated: S-farnesyl cysteine. A propeptide spans 419–421 (removed in mature form); it reads TII.

It belongs to the 2H phosphoesterase superfamily. CNPase family. In terms of assembly, exists as monomers and homodimers.

The protein localises to the membrane. It is found in the melanosome. The enzyme catalyses a nucleoside 2',3'-cyclic phosphate + H2O = a nucleoside 2'-phosphate + H(+). In terms of biological role, catalyzes the formation of 2'-nucleotide products from 2',3'-cyclic substrates. May participate in RNA metabolism in the myelinating cell, CNP is the third most abundant protein in central nervous system myelin. In Homo sapiens (Human), this protein is 2',3'-cyclic-nucleotide 3'-phosphodiesterase.